A 253-amino-acid polypeptide reads, in one-letter code: Indole-3-glycerol phosphate synthase (253 aa).

Belongs to the TrpC family.

The enzyme catalyses 1-(2-carboxyphenylamino)-1-deoxy-D-ribulose 5-phosphate + H(+) = (1S,2R)-1-C-(indol-3-yl)glycerol 3-phosphate + CO2 + H2O. It functions in the pathway amino-acid biosynthesis; L-tryptophan biosynthesis; L-tryptophan from chorismate: step 4/5. The polypeptide is Indole-3-glycerol phosphate synthase (Bacillus cereus (strain ZK / E33L)).